The following is a 633-amino-acid chain: DNA mismatch repair protein MutL (633 aa).

2 disordered regions span residues 337–364 (RPDDQLAPPGATSLTEPRPTGAAAGEFG) and 383–405 (VGWSGGSSASGGSSGYSAYTRPE). Over residues 385–396 (WSGGSSASGGSS) the composition is skewed to gly residues.

The protein belongs to the DNA mismatch repair MutL/HexB family.

Its function is as follows. This protein is involved in the repair of mismatches in DNA. It is required for dam-dependent methyl-directed DNA mismatch repair. May act as a 'molecular matchmaker', a protein that promotes the formation of a stable complex between two or more DNA-binding proteins in an ATP-dependent manner without itself being part of a final effector complex. The chain is DNA mismatch repair protein MutL from Pseudomonas aeruginosa (strain LESB58).